We begin with the raw amino-acid sequence, 51 residues long: Large ribosomal subunit protein eL39 (51 aa).

The protein belongs to the eukaryotic ribosomal protein eL39 family.

The polypeptide is Large ribosomal subunit protein eL39 (Staphylothermus marinus (strain ATCC 43588 / DSM 3639 / JCM 9404 / F1)).